The primary structure comprises 272 residues: Undecaprenyl-diphosphatase (272 aa).

7 helical membrane-spanning segments follow: residues 39-59 (SGLT…FVYF), 87-107 (WMIV…EQPI), 113-133 (SSPL…GLTD), 145-165 (ITLG…VPGV), 188-208 (FSFL…GLHL), 220-240 (PMLV…AFLL), and 251-271 (FVWY…VGLL).

The protein belongs to the UppP family.

It is found in the cell inner membrane. It carries out the reaction di-trans,octa-cis-undecaprenyl diphosphate + H2O = di-trans,octa-cis-undecaprenyl phosphate + phosphate + H(+). Its function is as follows. Catalyzes the dephosphorylation of undecaprenyl diphosphate (UPP). Confers resistance to bacitracin. In Trichlorobacter lovleyi (strain ATCC BAA-1151 / DSM 17278 / SZ) (Geobacter lovleyi), this protein is Undecaprenyl-diphosphatase.